The sequence spans 481 residues: G-protein coupled receptor 37-like 1 (481 aa).

The N-terminal stretch at 1 to 25 (MRWLWPLAVSLAVILAVGLSRVSGG) is a signal peptide. Disordered regions lie at residues 26-58 (APLHLGRHRAETQEQQSRSKRGTEDEEAKGVQQ) and 70-108 (PIHPAGLQPTKPLVATSPNPGKDGGTPDSGQELRGNLTG). At 26 to 134 (APLHLGRHRA…ESSYSAYAIM (109 aa)) the chain is on the extracellular side. O-linked (GalNAc...) threonine glycans are attached at residues Thr79 and Thr85. Ser86 carries an O-linked (GalNAc...) serine glycan. O-linked (GalNAc...) threonine glycosylation is present at Thr95. Residue Asn105 is glycosylated (N-linked (GlcNAc...) asparagine). Thr107 carries O-linked (GalNAc...) threonine glycosylation. Residues 135 to 155 (LLALVVFAVGIVGNLSVMCIV) traverse the membrane as a helical segment. Residues 156-167 (WHSYYLKSAWNS) are Cytoplasmic-facing. The helical transmembrane segment at 168–188 (ILASLALWDFLVLFFCLPIVI) threads the bilayer. Residues 189–205 (FNEITKQRLLGDVSCRA) lie on the Extracellular side of the membrane. Cys203 and Cys286 are disulfide-bonded. A helical membrane pass occupies residues 206-226 (VPFMEVSSLGVTTFSLCALGI). The Cytoplasmic segment spans residues 227–251 (DRFHVATSTLPKVRPIERCQSILAK). The helical transmembrane segment at 252–272 (LAVIWVGSMTLAVPELLLWQL) threads the bilayer. At 273-310 (AQEPAPTMGTLDSCIMKPSASLPESLYSLVMTYQNARM) the chain is on the extracellular side. The helical transmembrane segment at 311-331 (WWYFGCYFCLPILFTVTCQLV) threads the bilayer. Residues 332–361 (TWRVRGPPGRKSECRASKHEQCESQLNSTV) are Cytoplasmic-facing. Residues 362–382 (VGLTVVYAFCTLPENVCNIVV) form a helical membrane-spanning segment. The Extracellular segment spans residues 383–398 (AYLSTELTRQTLDLLG). The helical transmembrane segment at 399–419 (LINQFSTFFKGAITPVLLLCI) threads the bilayer. Residues 420–481 (CRPLGQAFLD…PPLLPLGTPC (62 aa)) are Cytoplasmic-facing. Position 471 is a phosphoserine (Ser471). Thr479 carries the post-translational modification Phosphothreonine.

Belongs to the G-protein coupled receptor 1 family. In terms of assembly, interacts with the PTCH1 receptor. Post-translationally, O-glycosylated. In terms of processing, undergoes metalloprotease-mediated cleavage which reduces its constitutive activity. Ubiquitinated. Expressed in primary cortical astrocytes (at protein level). Expressed in the central nervous system.

It is found in the cell membrane. Its subcellular location is the cell projection. It localises to the cilium membrane. G-protein coupled receptor. Has been shown to bind the neuroprotective and glioprotective factor prosaposin (PSAP), leading to endocytosis followed by an ERK phosphorylation cascade. However, other studies have shown that prosaposin does not increase activity. It has been suggested that GPR37L1 is a constitutively active receptor which signals through the guanine nucleotide-binding protein G(s) subunit alpha. Participates in the regulation of postnatal cerebellar development by modulating the Shh pathway. Regulates baseline blood pressure in females and protects against cardiovascular stress in males. Mediates inhibition of astrocyte glutamate transporters and reduction in neuronal N-methyl-D-aspartate receptor activity. The chain is G-protein coupled receptor 37-like 1 (GPR37L1) from Homo sapiens (Human).